Reading from the N-terminus, the 322-residue chain is Labrum-interacting protein from saliva LIPS-2 (322 aa).

The N-terminal stretch at 1–20 (MKTSLPIVVLLTAVISGVHP) is a signal peptide. A disulfide bond links Cys27 and Cys62. 2 N-linked (GlcNAc...) asparagine glycosylation sites follow: Asn168 and Asn175. Cys249 and Cys295 are disulfide-bonded.

Monomer in solution. Interacts (via the N-terminal domain) with cuticular protein Cp19 (via the C-terminus). Proteolytically cleaved by human mast cell tryptase and chymase. In terms of processing, glycosylated. In terms of tissue distribution, female salivary gland (at protein level). Female saliva (at protein level).

The protein resides in the secreted. In terms of biological role, salivary protein that promotes mosquito blood feeding on the vertebrate host by inducing morphological changes in the mosquito labrum. Interacts with the mosquito labrum end tip and triggers salivation and probing. Modulates enzymatic activities of human tryptase and chymase. The chain is Labrum-interacting protein from saliva LIPS-2 from Aedes albopictus (Asian tiger mosquito).